Here is a 926-residue protein sequence, read N- to C-terminus: MPVSFLSLASQPQIIDYPAIKEEIDSIKKVAAGDPVSEYRAVSLVLKQTVLKGREVIAEALTRRPHQGRIAALSYAYLTDQIIQLALYAMVGDDEKATDNLVILAVGGYGRGEMALHSDVDIAFLSRRSPRKAQKKLIESLISLLWDVGLRVSQSHRSLSDMVKMAKKDITIRTALLESRYLVGDKALFEEASTRFIQKVVAGSGRDFVAAKLLEWDERHLARGDSRYLVEPHLKEGKGGLRDLQSLFWIAKYLYLEKEARHTVLTSPILTDYALVKADLIAGHEAKRFRRCENFLWAVRCHLHILVKRPEERLNFDVQRSLAEKMGYRSKSGKSAVERFMHHYFLVTKMVGNLAALFIDALKVNHYLKPKSRRSGASKQIDGFPVIQGEIVLDDDFFFRHNPAALITLFAVAYRHRLDIHPLTLRQAGRDARLIDEALQNNPVCNAAFLTLFTLPYNPAPILKIMNNTGVLGRFIPDFGRIVAQMQFDMYHHYTVDEHAIRALDILWQIENNKLEDLYPLGSRLFKQLNARLVLYMALFLHDIAKGREGSHSALGAEIALRLCPRFGLTAAETKLVAWLVKNHLLMSHTAFQRDLADAKTITDFANAVKSPERLRLLYLLTVADISAVGPHIWNSWKNQLLTSLYEACSQCLLEGPTGHGAGRQQRIENRQNDVSEKLDWDNDLFHALVKRLPDDYWFSERTDVIAANMQQIIDTDSKGQSISVRGHEMPAYDATMISLYAIDHPGFFYRISGAIHATGGNILDARIHTTRDGMAMDNLLVQNSQGGMIKSGEHLNRMMQAIEDAATSHIRSSNKLAALRPPLFWRGKAFHVEPLVFIDNQASDRFTVIEVNAQDRPALLHDLGCALFNARLTISSAHIATYGERAVDVFYVSDLFSHKITNQNRLKAIEKRLLAAADAARISEK.

The uridylyltransferase stretch occupies residues 1-379; that stretch reads MPVSFLSLAS…PKSRRSGASK (379 aa). Positions 380–736 are uridylyl-removing; the sequence is QIDGFPVIQG…GHEMPAYDAT (357 aa). Positions 496-618 constitute an HD domain; sequence VDEHAIRALD…VKSPERLRLL (123 aa). 2 consecutive ACT domains span residues 737-814 and 849-926; these read MISL…IRSS and VIEV…ISEK.

The protein belongs to the GlnD family. It depends on Mg(2+) as a cofactor.

The catalysed reaction is [protein-PII]-L-tyrosine + UTP = [protein-PII]-uridylyl-L-tyrosine + diphosphate. It carries out the reaction [protein-PII]-uridylyl-L-tyrosine + H2O = [protein-PII]-L-tyrosine + UMP + H(+). Its activity is regulated as follows. Uridylyltransferase (UTase) activity is inhibited by glutamine, while glutamine activates uridylyl-removing (UR) activity. Modifies, by uridylylation and deuridylylation, the PII regulatory proteins (GlnB and homologs), in response to the nitrogen status of the cell that GlnD senses through the glutamine level. Under low glutamine levels, catalyzes the conversion of the PII proteins and UTP to PII-UMP and PPi, while under higher glutamine levels, GlnD hydrolyzes PII-UMP to PII and UMP (deuridylylation). Thus, controls uridylylation state and activity of the PII proteins, and plays an important role in the regulation of nitrogen assimilation and metabolism. This chain is Bifunctional uridylyltransferase/uridylyl-removing enzyme, found in Zymomonas mobilis subsp. mobilis (strain ATCC 31821 / ZM4 / CP4).